We begin with the raw amino-acid sequence, 1088 residues long: Pathogenesis-related homeodomain protein (1088 aa).

8 tandem repeats follow at residues 140-152 (INMG…PEEV), 173-199 (NSYQ…RSDD), 205-239 (GLVE…KVQT), 240-274 (GLEQ…KVQN), 283-295 (INME…PEQV), 316-342 (NSDQ…QSDD), 348-382 (GFKE…KVQT), and 383-417 (GLEQ…KVQD). A 2 X 13 AA repeats region spans residues 140 to 295 (INMGQKETMP…EQKETIPEQV (156 aa)). A 2 X 27 AA approximate repeats region spans residues 173-342 (NSYQSGLPPE…HAQFGHQSDD (170 aa)). The segment at 205 to 274 (GLVELVIGQK…SRGRPRKVQN (70 aa)) is 2 X 35 AA approximate tandem repeats (type C). The tract at residues 220-282 (PSQLVETGKR…QNSPTSFLEN (63 aa)) is disordered. DNA-binding regions (a.T hook) lie at residues 226–236 (TGKRGRGRPRK) and 261–271 (TGKRSRGRPRK). A compositionally biased stretch (polar residues) spans 272–282 (VQNSPTSFLEN). The segment covering 303–320 (SLTIPTDNQSRTYNSDQS) has biased composition (polar residues). 2 disordered regions span residues 303 to 343 (SLTI…SDDT) and 363 to 484 (PSQL…RMEE). Residues 348-417 (GFKELVIGQE…SRGRPRKVQD (70 aa)) form a 2 X 35 AA approximate tandem repeats (type C) region. 2 DNA-binding regions (a.T hook) span residues 369–379 (AGKRGRGRPRK) and 404–414 (TGKRSRGRPRK). The PHD-type zinc finger occupies 578–635 (DIFCAKCGSKDVTLSNDIILCDGACDRGFHQFCLDPPLLKEYIPPDDEGWLCPGCECK). Disordered regions lie at residues 667–810 (AASG…PLYP) and 851–901 (EEYG…ARES). A 4-1 repeat occupies 678-693 (GLPSDDSEDDDYDPGG). A 2 X 16 AA Asp/Glu-rich (acidic) repeats region spans residues 678–744 (GLPSDDSEDD…SEDDEYDPSG (67 aa)). The segment covering 705-718 (SSTDESDYQSESDD) has biased composition (acidic residues). Residues 729 to 744 (GLPSDDSEDDEYDPSG) form a 4-2 repeat. 2 stretches are compositionally biased toward basic and acidic residues: residues 788–802 (DHVR…HPEQ) and 874–901 (NNSD…ARES). Residues 935–994 (KSTSKTLHGEHATQRLLQSFKENQYPQRAVKESLAAELALSVRQVSNWFNNRRWSFRHSS) constitute a DNA-binding region (homeobox).

Belongs to the PHD-associated homeobox family.

The protein resides in the nucleus. In terms of biological role, specifically binds to the fungal elicitor-responsive DNA element, 5'-CTAATTGTTTA-3', of the gene PR2 promoter. This is Pathogenesis-related homeodomain protein (PRH) from Petroselinum crispum (Parsley).